Reading from the N-terminus, the 345-residue chain is Mannonate dehydratase 2 (345 aa).

It belongs to the mannonate dehydratase family. Requires Fe(2+) as cofactor. It depends on Mn(2+) as a cofactor.

It carries out the reaction D-mannonate = 2-dehydro-3-deoxy-D-gluconate + H2O. It participates in carbohydrate metabolism; pentose and glucuronate interconversion. Functionally, catalyzes the dehydration of D-mannonate. This is Mannonate dehydratase 2 (uxuA2) from Halalkalibacterium halodurans (strain ATCC BAA-125 / DSM 18197 / FERM 7344 / JCM 9153 / C-125) (Bacillus halodurans).